We begin with the raw amino-acid sequence, 264 residues long: Proteasome subunit alpha type-4 (264 aa).

It belongs to the peptidase T1A family. The 26S proteasome consists of a 20S proteasome core and two 19S regulatory subunits. The 20S proteasome core is composed of 28 subunits that are arranged in four stacked rings, resulting in a barrel-shaped structure. The two end rings are each formed by seven alpha subunits, and the two central rings are each formed by seven beta subunits. The catalytic chamber with the active sites is on the inside of the barrel. Interacts with PI31.

Its subcellular location is the cytoplasm. The protein resides in the nucleus. Its function is as follows. The proteasome is a multicatalytic proteinase complex which is characterized by its ability to cleave peptides with Arg, Phe, Tyr, Leu, and Glu adjacent to the leaving group at neutral or slightly basic pH. The proteasome has an ATP-dependent proteolytic activity. This Drosophila melanogaster (Fruit fly) protein is Proteasome subunit alpha type-4 (Prosalpha3).